The chain runs to 166 residues: NAD(P)H-quinone oxidoreductase subunit I, chloroplastic (166 aa).

4Fe-4S ferredoxin-type domains are found at residues 55-84 and 95-124; these read GRIHFEFDKCIACEVCVRVCPIDLPVVDWK and LNYSIDFGICIFCGNCVEYCPTNCLSMTEE. Positions 64, 67, 70, 74, 104, 107, 110, and 114 each coordinate [4Fe-4S] cluster.

The protein belongs to the complex I 23 kDa subunit family. NDH is composed of at least 16 different subunits, 5 of which are encoded in the nucleus. It depends on [4Fe-4S] cluster as a cofactor.

It is found in the plastid. The protein localises to the chloroplast thylakoid membrane. It carries out the reaction a plastoquinone + NADH + (n+1) H(+)(in) = a plastoquinol + NAD(+) + n H(+)(out). It catalyses the reaction a plastoquinone + NADPH + (n+1) H(+)(in) = a plastoquinol + NADP(+) + n H(+)(out). In terms of biological role, NDH shuttles electrons from NAD(P)H:plastoquinone, via FMN and iron-sulfur (Fe-S) centers, to quinones in the photosynthetic chain and possibly in a chloroplast respiratory chain. The immediate electron acceptor for the enzyme in this species is believed to be plastoquinone. Couples the redox reaction to proton translocation, and thus conserves the redox energy in a proton gradient. The chain is NAD(P)H-quinone oxidoreductase subunit I, chloroplastic from Aphanactis jamesoniana.